Here is a 280-residue protein sequence, read N- to C-terminus: Bifunctional protein FolD (280 aa).

NADP(+) is bound by residues 166-168 (GRS) and Ser191.

This sequence belongs to the tetrahydrofolate dehydrogenase/cyclohydrolase family. Homodimer.

It catalyses the reaction (6R)-5,10-methylene-5,6,7,8-tetrahydrofolate + NADP(+) = (6R)-5,10-methenyltetrahydrofolate + NADPH. The catalysed reaction is (6R)-5,10-methenyltetrahydrofolate + H2O = (6R)-10-formyltetrahydrofolate + H(+). It participates in one-carbon metabolism; tetrahydrofolate interconversion. Functionally, catalyzes the oxidation of 5,10-methylenetetrahydrofolate to 5,10-methenyltetrahydrofolate and then the hydrolysis of 5,10-methenyltetrahydrofolate to 10-formyltetrahydrofolate. This is Bifunctional protein FolD from Saccharophagus degradans (strain 2-40 / ATCC 43961 / DSM 17024).